Here is a 299-residue protein sequence, read N- to C-terminus: Biphenyl-2,3-diol 1,2-dioxygenase (299 aa).

2 VOC domains span residues 6-121 (ELGY…IFYG) and 146-267 (GIGH…FGWG). Fe cation-binding residues include H149, H212, and E263.

It belongs to the extradiol ring-cleavage dioxygenase family. In terms of assembly, homooctamer. The cofactor is Fe(2+).

It catalyses the reaction biphenyl-2,3-diol + O2 = 2-hydroxy-6-oxo-6-phenylhexa-2,4-dienoate + H(+). It functions in the pathway xenobiotic degradation; biphenyl degradation; 2-hydroxy-2,4-pentadienoate and benzoate from biphenyl: step 3/4. This chain is Biphenyl-2,3-diol 1,2-dioxygenase (bphC), found in Sphingomonas paucimobilis (Pseudomonas paucimobilis).